The primary structure comprises 138 residues: Ferredoxin-2 (138 aa).

The 2Fe-2S ferredoxin-type domain maps to 27-117 (ADANLQSTDF…DAKIVYNLKH (91 aa)). [2Fe-2S] cluster is bound by residues Cys-62, Cys-67, Cys-70, and Cys-100.

Belongs to the 2Fe2S plant-type ferredoxin family. [2Fe-2S] cluster is required as a cofactor.

Functionally, ferredoxins are iron-sulfur proteins that transfer electrons in a wide variety of metabolic reactions. This chain is Ferredoxin-2 (fer2), found in Haloarcula marismortui (strain ATCC 43049 / DSM 3752 / JCM 8966 / VKM B-1809) (Halobacterium marismortui).